A 409-amino-acid polypeptide reads, in one-letter code: L-cysteine:1D-myo-inositol 2-amino-2-deoxy-alpha-D-glucopyranoside ligase (409 aa).

Position 43 (cysteine 43) interacts with Zn(2+). Residues cysteine 43 to threonine 46, threonine 58, and asparagine 81 to threonine 83 contribute to the L-cysteinyl-5'-AMP site. The short motif at isoleucine 45–histidine 55 is the 'HIGH' region element. A 'ERGGDP' region motif is present at residues glutamate 183–proline 188. Residue tryptophan 224 participates in L-cysteinyl-5'-AMP binding. A Zn(2+)-binding site is contributed by cysteine 228. L-cysteinyl-5'-AMP is bound at residue glycine 246–aspartate 248. Histidine 253 is a binding site for Zn(2+). Position 280 (valine 280) interacts with L-cysteinyl-5'-AMP. The 'KMSKS' region signature appears at lysine 286–serine 290.

The protein belongs to the class-I aminoacyl-tRNA synthetase family. MshC subfamily. Monomer. Zn(2+) serves as cofactor.

The catalysed reaction is 1D-myo-inositol 2-amino-2-deoxy-alpha-D-glucopyranoside + L-cysteine + ATP = 1D-myo-inositol 2-(L-cysteinylamino)-2-deoxy-alpha-D-glucopyranoside + AMP + diphosphate + H(+). Its function is as follows. Catalyzes the ATP-dependent condensation of GlcN-Ins and L-cysteine to form L-Cys-GlcN-Ins. This is L-cysteine:1D-myo-inositol 2-amino-2-deoxy-alpha-D-glucopyranoside ligase (mshC) from Streptomyces avermitilis (strain ATCC 31267 / DSM 46492 / JCM 5070 / NBRC 14893 / NCIMB 12804 / NRRL 8165 / MA-4680).